A 90-amino-acid polypeptide reads, in one-letter code: DNA-binding protein HU-alpha (90 aa).

Belongs to the bacterial histone-like protein family. Heterodimer of an alpha and a beta chain.

In terms of biological role, histone-like DNA-binding protein which is capable of wrapping DNA to stabilize it, and thus to prevent its denaturation under extreme environmental conditions. The protein is DNA-binding protein HU-alpha (hupA) of Aeromonas hydrophila.